A 111-amino-acid polypeptide reads, in one-letter code: Cystatin (111 aa).

The Cystatin domain maps to 3-103 (GGLSPRDVTD…CRFEVWSRPW (101 aa)). The Secondary area of contact motif lies at 47–51 (QVVSG). Cys-65 and Cys-81 are oxidised to a cystine.

Belongs to the cystatin family. Expressed by the venom gland.

It is found in the secreted. Its function is as follows. Inhibits various C1 cysteine proteases including cathepsin L, papain and cathepsin B. This protein has no toxic activity and its function in the venom is unknown. It may play a role as housekeeping or regulatory protein. This Bitis arietans (African puff adder) protein is Cystatin.